The sequence spans 363 residues: Protein-glutamate methylesterase/protein-glutamine glutaminase 2 (363 aa).

The region spanning 7-124 is the Response regulatory domain; the sequence is RVLVVDDSAL…SLTLENVADE (118 aa). Aspartate 58 carries the post-translational modification 4-aspartylphosphate. The region spanning 160–357 is the CheB-type methylesterase domain; it reads PVASRTTPSK…NLLMVQSAAQ (198 aa). Residues serine 176, histidine 203, and aspartate 299 contribute to the active site.

It belongs to the CheB family. Post-translationally, phosphorylated by CheA. Phosphorylation of the N-terminal regulatory domain activates the methylesterase activity.

Its subcellular location is the cytoplasm. It catalyses the reaction [protein]-L-glutamate 5-O-methyl ester + H2O = L-glutamyl-[protein] + methanol + H(+). The catalysed reaction is L-glutaminyl-[protein] + H2O = L-glutamyl-[protein] + NH4(+). Involved in chemotaxis. Part of a chemotaxis signal transduction system that modulates chemotaxis in response to various stimuli. Catalyzes the demethylation of specific methylglutamate residues introduced into the chemoreceptors (methyl-accepting chemotaxis proteins or MCP) by CheR. Also mediates the irreversible deamidation of specific glutamine residues to glutamic acid. In Koribacter versatilis (strain Ellin345), this protein is Protein-glutamate methylesterase/protein-glutamine glutaminase 2.